Consider the following 101-residue polypeptide: Small ribosomal subunit protein uS10 (101 aa).

Belongs to the universal ribosomal protein uS10 family. As to quaternary structure, part of the 30S ribosomal subunit.

Involved in the binding of tRNA to the ribosomes. The protein is Small ribosomal subunit protein uS10 of Brachyspira hyodysenteriae (Treponema hyodysenteriae).